Reading from the N-terminus, the 171-residue chain is Small ribosomal subunit protein uS5 (171 aa).

Residues 14 to 77 form the S5 DRBM domain; that stretch reads YIEKLVNIRR…DKARKAMKNV (64 aa).

It belongs to the universal ribosomal protein uS5 family. In terms of assembly, part of the 30S ribosomal subunit. Contacts proteins S4 and S8.

With S4 and S12 plays an important role in translational accuracy. Its function is as follows. Located at the back of the 30S subunit body where it stabilizes the conformation of the head with respect to the body. This chain is Small ribosomal subunit protein uS5, found in Vesicomyosocius okutanii subsp. Calyptogena okutanii (strain HA).